The chain runs to 484 residues: LSAASWRTQSIYFLLTDRFGRTDNSTTATCNTGNEIYCGGSWQGIIDHLDYIEGMGFTAIWISPITEQLPQDTADGEAYHGYWQQKIYDVNSNFGTADNLKSLSDALHARGMYLMVDVVPDHMGYAGNGNDVDYSVFDPFDSSSYFHPYCLITDWDNLTMVEDCWEGDTIVSLPDLDTTETAVRTIWYDWVADLVSNYSVDGLRIDSVLEVQPDFFPGYNKASGVYCVGEIDNGNPASDCPYQKVLDGVLNYPIYWQLLYAFESSSGSISNLYNMIKSVASDCSDPTLLGNFIENHDNPRFAKYTSDYSQAKNVLSYIFLSDGIPIVYAGEEQHYAGGKVPYNREATWLSGYDTSAELYTWIATTNAIRKLAIAADSAYITYANDAFYTDSNTIAMAKGTSGSQVITVLSNKGSSGSSYTLTLSGSGYTSGTKLIEAYTCTSVTVDSSGDIPVPMASGLPRVLLPASVVDSSSLCGGSGRLYVE.

N24 carries an N-linked (GlcNAc...) asparagine glycan. A disulfide bond links C30 and C38. W83 is a binding site for substrate. D121 serves as a coordination point for Ca(2+). A substrate-binding site is contributed by H122. The cysteines at positions 150 and 164 are disulfide-linked. An N-linked (GlcNAc...) asparagine glycan is attached at N157. E162 and D175 together coordinate Ca(2+). N197 carries N-linked (GlcNAc...) asparagine glycosylation. A substrate-binding site is contributed by R204. Residues D206, E210, and E230 each coordinate Ca(2+). D206 serves as the catalytic Nucleophile. 209 to 210 (LE) serves as a coordination point for substrate. E230 acts as the Proton donor in catalysis. Residue G234 participates in substrate binding. C240 and C283 are joined by a disulfide. D297 and R344 together coordinate substrate. C440 and C475 form a disulfide bridge.

This sequence belongs to the glycosyl hydrolase 13 family. As to quaternary structure, monomer. Ca(2+) serves as cofactor.

Its subcellular location is the secreted. The enzyme catalyses Endohydrolysis of (1-&gt;4)-alpha-D-glucosidic linkages in polysaccharides containing three or more (1-&gt;4)-alpha-linked D-glucose units.. The polypeptide is Acid alpha-amylase (Aspergillus niger).